A 214-amino-acid chain; its full sequence is Phosphoenolpyruvate guanylyltransferase (214 aa).

Phosphoenolpyruvate is bound by residues Thr148, Gly163, and Ser166.

This sequence belongs to the CofC family.

The catalysed reaction is phosphoenolpyruvate + GTP + H(+) = enolpyruvoyl-2-diphospho-5'-guanosine + diphosphate. It participates in cofactor biosynthesis; coenzyme F420 biosynthesis. Functionally, guanylyltransferase that catalyzes the activation of phosphoenolpyruvate (PEP) as enolpyruvoyl-2-diphospho-5'-guanosine, via the condensation of PEP with GTP. It is involved in the biosynthesis of coenzyme F420, a hydride carrier cofactor. The polypeptide is Phosphoenolpyruvate guanylyltransferase (Mycolicibacterium gilvum (strain PYR-GCK) (Mycobacterium gilvum (strain PYR-GCK))).